The sequence spans 138 residues: Holo-[acyl-carrier-protein] synthase (138 aa).

Residues aspartate 8 and glutamate 56 each coordinate Mg(2+).

It belongs to the P-Pant transferase superfamily. AcpS family. Mg(2+) is required as a cofactor.

It is found in the cytoplasm. It catalyses the reaction apo-[ACP] + CoA = holo-[ACP] + adenosine 3',5'-bisphosphate + H(+). In terms of biological role, transfers the 4'-phosphopantetheine moiety from coenzyme A to a Ser of acyl-carrier-protein. This is Holo-[acyl-carrier-protein] synthase from Clostridium novyi (strain NT).